A 406-amino-acid chain; its full sequence is Cysteine desulfurase (406 aa).

Lysine 226 is modified (N6-(pyridoxal phosphate)lysine). The active-site Cysteine persulfide intermediate is cysteine 364.

Belongs to the class-V pyridoxal-phosphate-dependent aminotransferase family. Csd subfamily. Homodimer. Interacts with SufE and the SufBCD complex composed of SufB, SufC and SufD. The interaction with SufE is required to mediate the direct transfer of the sulfur atom from the S-sulfanylcysteine. Pyridoxal 5'-phosphate serves as cofactor.

It localises to the cytoplasm. The catalysed reaction is (sulfur carrier)-H + L-cysteine = (sulfur carrier)-SH + L-alanine. It carries out the reaction L-selenocysteine + AH2 = hydrogenselenide + L-alanine + A + H(+). It functions in the pathway cofactor biosynthesis; iron-sulfur cluster biosynthesis. Its function is as follows. Cysteine desulfurases mobilize the sulfur from L-cysteine to yield L-alanine, an essential step in sulfur metabolism for biosynthesis of a variety of sulfur-containing biomolecules. Component of the suf operon, which is activated and required under specific conditions such as oxidative stress and iron limitation. Acts as a potent selenocysteine lyase in vitro, that mobilizes selenium from L-selenocysteine. Selenocysteine lyase activity is however unsure in vivo. The polypeptide is Cysteine desulfurase (Klebsiella pneumoniae (strain 342)).